Reading from the N-terminus, the 518-residue chain is Protein CYCLOPS (518 aa).

Residues 401–451 (DKKRKSLERYGSITSAVSDDKGDTTKKRRVERSRKMAEAKERNSTPSVPSD) are disordered. Short sequence motifs (nuclear localization signal) lie at residues 402–405 (KKRK) and 426–429 (KKRR). A compositionally biased stretch (basic and acidic residues) spans 433–443 (SRKMAEAKERN). The stretch at 452-518 (MQAVLKRCEN…ERILSETEKM (67 aa)) forms a coiled coil.

Belongs to the CYCLOPS family. Forms homodimers. Interacts with CCAMK. In terms of processing, phosphorylated at the N-terminus by CCAMK. As to expression, expressed in roots.

It localises to the nucleus. Its function is as follows. Involved in symbiotic signaling. Required for root infection by symbiotic rhizobia, infection thread (IT) formation, and nodule development. Probably not involved in nodule organogenesis. Involved in arbuscular mycorrhizal (AM) symbiosis. Required for fungal infection of the outer cortical cell layers, and for arbuscule development during the AM symbiosis, by binding, as a complex comprising CCaMK, CYCLOPS, and DELLA, to RAM1 promoter cis element thus promoting its expression. Acts downstream of CCAMK. Binds to the promoter of ERN1 and strongly transactivates ERN1, a transcriptional regulator required for nodulation. This is Protein CYCLOPS from Lotus japonicus (Lotus corniculatus var. japonicus).